The sequence spans 648 residues: Forkhead box protein N1 (648 aa).

The tract at residues 1–95 (MVSLLPPQSD…PGPGSFRLSP (95 aa)) is disordered. Positions 38 to 50 (APQNKHANFSCSS) are enriched in polar residues. The segment covering 54–67 (DGPPERTPSLPPHS) has biased composition (pro residues). Positions 271 to 367 (KPIYSYSILI…EELQKWKRKD (97 aa)) form a DNA-binding region, fork-head. 3 disordered regions span residues 392–432 (LGSP…APGP), 457–521 (HLSP…TLLP), and 629–648 (SAAA…LALA). Residues 398 to 412 (GCPPPGLAGPGPIRP) are compositionally biased toward pro residues.

Bone marrow (at protein level). Expressed in thymus and skin.

The protein localises to the nucleus. Functionally, transcriptional regulator which regulates the development, differentiation, and function of thymic epithelial cells (TECs) both in the prenatal and postnatal thymus. Acts as a master regulator of the TECs lineage development and is required from the onset of differentiation in progenitor TECs in the developing fetus to the final differentiation steps through which TECs mature to acquire their full functionality. Regulates, either directly or indirectly the expression of a variety of genes that mediate diverse aspects of thymus development and function, including MHC Class II, DLL4, CCL25, CTSL, CD40 and PAX1. Regulates the differentiation of the immature TECs into functional cortical TECs (cTECs) and medullary TECs (mTECs). Essential for maintenance of mTECs population in the postnatal thymus. Involved in the morphogenesis and maintenance of the three-dimensional thymic microstructure which is necessary for a fully functional thymus. Plays an important role in the maintenance of hematopoiesis and particularly T lineage progenitors within the bone marrow niche with age. Essential for the vascularization of the thymus anlage. Promotes the terminal differentiation of epithelial cells in the epidermis and hair follicles, partly by negatively regulating the activity of protein kinase C. The polypeptide is Forkhead box protein N1 (Foxn1) (Mus musculus (Mouse)).